Consider the following 362-residue polypeptide: MIKIAIDAMGGDFAPLEIVKGTLLALNKNTELQVFLYGNQKLITPLIEKTPFFGNKQIIIKHTPYFLGSADKNIRDQLKTTPNTSLFLALEAAKQDEVQGVVSAGATQTLILASHLILKKMPLMKRIAIAPMFNSFDNRTRILLDAGANTELKPQHLHTFANYATIIAKEILAIPNPQIKLLNIGTEPTKGRALELETYQLLSQDSNLNFGGNEEPQNLLTTSADILLSDGFTANIALKTYEGTMLNFMNHLKNILTKNFIKKIATKTLFQKPLQQLKNQIDPRQIGGAMLLGLNKIVIKAHGSSQSYAFCQAILQTQKLIKAQVNQKIANALEIAKNKENQTKKISTSTINPKTSETTKES.

The interval 343–362 (TKKISTSTINPKTSETTKES) is disordered. Residues 344 to 356 (KKISTSTINPKTS) show a composition bias toward polar residues.

This sequence belongs to the PlsX family. In terms of assembly, homodimer. Probably interacts with PlsY.

The protein resides in the cytoplasm. The enzyme catalyses a fatty acyl-[ACP] + phosphate = an acyl phosphate + holo-[ACP]. It functions in the pathway lipid metabolism; phospholipid metabolism. Its function is as follows. Catalyzes the reversible formation of acyl-phosphate (acyl-PO(4)) from acyl-[acyl-carrier-protein] (acyl-ACP). This enzyme utilizes acyl-ACP as fatty acyl donor, but not acyl-CoA. The sequence is that of Phosphate acyltransferase from Aster yellows witches'-broom phytoplasma (strain AYWB).